The chain runs to 85 residues: Small ribosomal subunit protein eS21 (85 aa).

The protein belongs to the eukaryotic ribosomal protein eS21 family. In terms of assembly, component of the 40S small ribosomal subunit.

Its subcellular location is the cytoplasm. It is found in the cytosol. The protein resides in the rough endoplasmic reticulum. This chain is Small ribosomal subunit protein eS21 (RPS21), found in Branchiostoma belcheri (Amphioxus).